We begin with the raw amino-acid sequence, 236 residues long: MGQKIHPLGFRLGVTQNHHSTWFAPLNNYSELLKEDERIRNCIQQYVRKYVRSSSRSAEIARVQIQKKTDLVEVQIHTASPSLLVQTRVPNRSTNTQEIGIEYLRRNIQNTLNPGNRKLNMTLSQVAKPYGEAIILAEYIALQLESRVAFRKTMKQAIKLANKSGNARGIKIQIAGRLNGAEIARVEWAREGRVPLHTLRAQIDYCHYPAQTIYGVLGIKVWVFQNKSLISNNQQM.

The KH type-2 domain maps to 47-127 (VRKYVRSSSR…KLNMTLSQVA (81 aa)).

This sequence belongs to the universal ribosomal protein uS3 family. In terms of assembly, part of the 30S ribosomal subunit.

The protein localises to the plastid. The protein resides in the chloroplast. The polypeptide is Small ribosomal subunit protein uS3c (rps3) (Zygnema circumcarinatum (Green alga)).